Here is a 461-residue protein sequence, read N- to C-terminus: Bifunctional protein GlmU (461 aa).

Positions M1–R234 are pyrophosphorylase. UDP-N-acetyl-alpha-D-glucosamine is bound by residues L8–G11, K22, Q77, G82–T83, Y104–D106, G141, E159, N174, and N232. Residue D106 participates in Mg(2+) binding. N232 is a binding site for Mg(2+). The linker stretch occupies residues V235–A255. Positions G256–S461 are N-acetyltransferase. Residues R338 and K356 each contribute to the UDP-N-acetyl-alpha-D-glucosamine site. H368 (proton acceptor) is an active-site residue. Y371 and N382 together coordinate UDP-N-acetyl-alpha-D-glucosamine. Acetyl-CoA-binding positions include A385, N391–Y392, S410, A428, and R445.

The protein in the N-terminal section; belongs to the N-acetylglucosamine-1-phosphate uridyltransferase family. In the C-terminal section; belongs to the transferase hexapeptide repeat family. As to quaternary structure, homotrimer. It depends on Mg(2+) as a cofactor.

The protein resides in the cytoplasm. The enzyme catalyses alpha-D-glucosamine 1-phosphate + acetyl-CoA = N-acetyl-alpha-D-glucosamine 1-phosphate + CoA + H(+). It catalyses the reaction N-acetyl-alpha-D-glucosamine 1-phosphate + UTP + H(+) = UDP-N-acetyl-alpha-D-glucosamine + diphosphate. Its pathway is nucleotide-sugar biosynthesis; UDP-N-acetyl-alpha-D-glucosamine biosynthesis; N-acetyl-alpha-D-glucosamine 1-phosphate from alpha-D-glucosamine 6-phosphate (route II): step 2/2. It participates in nucleotide-sugar biosynthesis; UDP-N-acetyl-alpha-D-glucosamine biosynthesis; UDP-N-acetyl-alpha-D-glucosamine from N-acetyl-alpha-D-glucosamine 1-phosphate: step 1/1. It functions in the pathway bacterial outer membrane biogenesis; LPS lipid A biosynthesis. Functionally, catalyzes the last two sequential reactions in the de novo biosynthetic pathway for UDP-N-acetylglucosamine (UDP-GlcNAc). The C-terminal domain catalyzes the transfer of acetyl group from acetyl coenzyme A to glucosamine-1-phosphate (GlcN-1-P) to produce N-acetylglucosamine-1-phosphate (GlcNAc-1-P), which is converted into UDP-GlcNAc by the transfer of uridine 5-monophosphate (from uridine 5-triphosphate), a reaction catalyzed by the N-terminal domain. In Colwellia psychrerythraea (strain 34H / ATCC BAA-681) (Vibrio psychroerythus), this protein is Bifunctional protein GlmU.